The primary structure comprises 648 residues: tRNA 5-methylaminomethyl-2-thiouridine biosynthesis bifunctional protein MnmC (648 aa).

Residues 1–228 (MTDRLVPASL…VDDLLVGEYA (228 aa)) form a tRNA (mnm(5)s(2)U34)-methyltransferase region. The interval 252–648 (IGAGLAGCAV…LRARRVGRAG (397 aa)) is FAD-dependent cmnm(5)s(2)U34 oxidoreductase.

In the N-terminal section; belongs to the methyltransferase superfamily. tRNA (mnm(5)s(2)U34)-methyltransferase family. It in the C-terminal section; belongs to the DAO family. FAD is required as a cofactor.

The protein resides in the cytoplasm. The enzyme catalyses 5-aminomethyl-2-thiouridine(34) in tRNA + S-adenosyl-L-methionine = 5-methylaminomethyl-2-thiouridine(34) in tRNA + S-adenosyl-L-homocysteine + H(+). Its function is as follows. Catalyzes the last two steps in the biosynthesis of 5-methylaminomethyl-2-thiouridine (mnm(5)s(2)U) at the wobble position (U34) in tRNA. Catalyzes the FAD-dependent demodification of cmnm(5)s(2)U34 to nm(5)s(2)U34, followed by the transfer of a methyl group from S-adenosyl-L-methionine to nm(5)s(2)U34, to form mnm(5)s(2)U34. The sequence is that of tRNA 5-methylaminomethyl-2-thiouridine biosynthesis bifunctional protein MnmC from Burkholderia lata (strain ATCC 17760 / DSM 23089 / LMG 22485 / NCIMB 9086 / R18194 / 383).